Reading from the N-terminus, the 430-residue chain is tRNA(Ile)-lysidine synthase (430 aa).

21–26 (SGGLDS) provides a ligand contact to ATP.

Belongs to the tRNA(Ile)-lysidine synthase family.

The protein localises to the cytoplasm. It carries out the reaction cytidine(34) in tRNA(Ile2) + L-lysine + ATP = lysidine(34) in tRNA(Ile2) + AMP + diphosphate + H(+). In terms of biological role, ligates lysine onto the cytidine present at position 34 of the AUA codon-specific tRNA(Ile) that contains the anticodon CAU, in an ATP-dependent manner. Cytidine is converted to lysidine, thus changing the amino acid specificity of the tRNA from methionine to isoleucine. The chain is tRNA(Ile)-lysidine synthase from Salmonella dublin (strain CT_02021853).